We begin with the raw amino-acid sequence, 1082 residues long: DNA-directed RNA polymerase subunit beta (1082 aa).

Belongs to the RNA polymerase beta chain family. In plastids the minimal PEP RNA polymerase catalytic core is composed of four subunits: alpha, beta, beta', and beta''. When a (nuclear-encoded) sigma factor is associated with the core the holoenzyme is formed, which can initiate transcription.

The protein resides in the plastid. It localises to the chloroplast. It catalyses the reaction RNA(n) + a ribonucleoside 5'-triphosphate = RNA(n+1) + diphosphate. DNA-dependent RNA polymerase catalyzes the transcription of DNA into RNA using the four ribonucleoside triphosphates as substrates. The polypeptide is DNA-directed RNA polymerase subunit beta (Euglena gracilis).